The sequence spans 206 residues: LexA repressor (206 aa).

Positions 28-48 (RAEIATRLGFKSANAAEEHLK) form a DNA-binding region, H-T-H motif. Active-site for autocatalytic cleavage activity residues include S123 and K160.

This sequence belongs to the peptidase S24 family. Homodimer.

The enzyme catalyses Hydrolysis of Ala-|-Gly bond in repressor LexA.. Represses a number of genes involved in the response to DNA damage (SOS response), including recA and lexA. In the presence of single-stranded DNA, RecA interacts with LexA causing an autocatalytic cleavage which disrupts the DNA-binding part of LexA, leading to derepression of the SOS regulon and eventually DNA repair. This Shewanella sp. (strain ANA-3) protein is LexA repressor.